We begin with the raw amino-acid sequence, 398 residues long: 1,4-beta-D-glucan cellobiohydrolase CEL6C (398 aa).

Residues 1-18 form the signal peptide; that stretch reads MKITSSAAALALVASAVA. N-linked (GlcNAc...) asparagine glycosylation is present at Asn70. Asp125 is a catalytic residue. Asp170 serves as the catalytic Proton donor. The substrate site is built by Trp218, Trp318, Lys346, and Glu350.

It belongs to the glycosyl hydrolase 6 (cellulase B) family. Post-translationally, both N- and O-glycosylated.

Its subcellular location is the secreted. It carries out the reaction Hydrolysis of (1-&gt;4)-beta-D-glucosidic linkages in cellulose and cellotetraose, releasing cellobiose from the non-reducing ends of the chains.. Exoglucanase that plays an important function in biomass degradation by catalyzing the hydrolysis of the non-reducing end beta-1,4-glucosidic linkages in cellulose and cellotetraose to release cellobiose. Hydrolyzes crystalline and amorphous cellulose but is inactive on hydroxyethyl cellulose, mannan, galactomannan, xyloglucan, arabinoxylan, arabinan, xylan, and pectin. This chain is 1,4-beta-D-glucan cellobiohydrolase CEL6C, found in Podospora anserina (strain S / ATCC MYA-4624 / DSM 980 / FGSC 10383) (Pleurage anserina).